A 266-amino-acid polypeptide reads, in one-letter code: Glucosamine-6-phosphate deaminase (266 aa).

Aspartate 72 functions as the Proton acceptor; for enolization step in the catalytic mechanism. Aspartate 141 functions as the For ring-opening step in the catalytic mechanism. Histidine 143 acts as the Proton acceptor; for ring-opening step in catalysis. The active-site For ring-opening step is the glutamate 148.

Belongs to the glucosamine/galactosamine-6-phosphate isomerase family. NagB subfamily. Homohexamer.

The catalysed reaction is alpha-D-glucosamine 6-phosphate + H2O = beta-D-fructose 6-phosphate + NH4(+). It participates in amino-sugar metabolism; N-acetylneuraminate degradation; D-fructose 6-phosphate from N-acetylneuraminate: step 5/5. Allosterically activated by N-acetylglucosamine 6-phosphate (GlcNAc6P). Functionally, catalyzes the reversible isomerization-deamination of glucosamine 6-phosphate (GlcN6P) to form fructose 6-phosphate (Fru6P) and ammonium ion. This Aliivibrio fischeri (strain ATCC 700601 / ES114) (Vibrio fischeri) protein is Glucosamine-6-phosphate deaminase.